Reading from the N-terminus, the 378-residue chain is Aminotransferase apf4 (378 aa).

Arg88 serves as a coordination point for pyridoxal 5'-phosphate. At Lys189 the chain carries N6-(pyridoxal phosphate)lysine. Glu228 is a binding site for pyridoxal 5'-phosphate. The interval 359 to 378 is disordered; sequence ERGHNGQPTADPTRVIEMPE.

It belongs to the class-IV pyridoxal-phosphate-dependent aminotransferase family. It depends on pyridoxal 5'-phosphate as a cofactor.

It functions in the pathway secondary metabolite biosynthesis. Functionally, aminotransferase; part of the gene cluster that mediates the biosynthesis of the cyclic tetrapeptide apicidin F (APF). The non-ribosomal peptide synthetase apf1 incorporates four different amino acids to produce apicidin F: L-phenylalanine, D-pipecolic acid (D-pip), N-methoxy-L-tryptophan and L-2-aminooctanedioic acid. L-Phenylalanine is the only proteinogenic amino acid directly used by apf1. The 3 other apf1 substrates are non-proteinogenic and have to be modified by other enzymes of the cluster. Lysine is converted to delta-1-pyrroline-5-carboxylate (P5C) which is reduced to L-pipecolic acid (L-pip) by apf3. L-pip is epimerized to D-pip, probably by apf1 activity, prior to incorporation. L-Tryptophan is N-oxidyzed by one of the cytochrome P450 monooxygenases (apf7 or apf8), and further methylated at the hydroxy group by the O-methyltransferase apf6 to yield N-methoxy-L-tryptophan. The synthesis of the fourth apf1 substrate is more complex. The fatty acid synthase apf5 is involved in the synthesis of the octanoic acid backbone of L-2-aminooctanedioic acid by fixing one acetyl-CoA unit and three malonyl-CoA units. Then one of the cytochrome P450 monooxygenases (apf7 or apf8) may oxidize this backbone to 2-oxooctanoic acid. The aminotransferase apf4 is predicted to catalyze the exchange of the keto group with an amino group. The next step would be the oxidation of 2-aminooctanoic acid by one of the cytochrome P450 monooxygenases (apf7 or apf8). The last step is the oxidation of 2-amino-8-hydroxyoctanoic acid to 2-aminooctanedioic acid is catalyzed by the FAD-dependent monooxygenase apf9. In Gibberella fujikuroi (strain CBS 195.34 / IMI 58289 / NRRL A-6831) (Bakanae and foot rot disease fungus), this protein is Aminotransferase apf4.